The primary structure comprises 436 residues: Coiled-coil domain-containing protein 71 (436 aa).

The tract at residues 95-119 (ATSLPARAPQTAKSVPTGQTTLLPV) is disordered. Polar residues predominate over residues 105 to 116 (TAKSVPTGQTTL). Ser129 carries the phosphoserine modification. Disordered regions lie at residues 210 to 258 (LRKG…MKGR) and 314 to 405 (ALRG…KVDR). Residues 264-334 (KTVRGKAPRT…QAKAKAARTK (71 aa)) adopt a coiled-coil conformation. Over residues 329-340 (KAARTKHKKRPK) the composition is skewed to basic residues. Polar residues predominate over residues 344–359 (QTRTGRTSLKNSSETV). Basic residues predominate over residues 373-386 (PPKKRARCVPRSKA).

This is Coiled-coil domain-containing protein 71 (Ccdc71) from Rattus norvegicus (Rat).